Here is a 369-residue protein sequence, read N- to C-terminus: Peptide chain release factor 2 (369 aa).

Position 247 is an N5-methylglutamine (Gln247).

The protein belongs to the prokaryotic/mitochondrial release factor family. Post-translationally, methylated by PrmC. Methylation increases the termination efficiency of RF2.

It localises to the cytoplasm. In terms of biological role, peptide chain release factor 2 directs the termination of translation in response to the peptide chain termination codons UGA and UAA. This chain is Peptide chain release factor 2, found in Phenylobacterium zucineum (strain HLK1).